Consider the following 365-residue polypeptide: Endophilin-B1 (365 aa).

Residue M1 is modified to N-acetylmethionine. The tract at residues 1 to 30 (MNIMDFNVKKLAADAGTFLSRAVQFTEEKL) is membrane-binding amphipathic helix. Positions 1-37 (MNIMDFNVKKLAADAGTFLSRAVQFTEEKLGQAEKTE) are required for membrane binding. Residues 27–261 (EEKLGQAEKT…LGSFPSNYLS (235 aa)) enclose the BAR domain. T145 carries the post-translational modification Phosphothreonine; by CDK5. Positions 155 to 195 (YKTIAKERKLLQNKRLDLDAAKTRLKKAKAAETRNSSEQEL) form a coiled coil. In terms of domain architecture, SH3 spans 305–365 (SGSRKARVLY…VPITYLELLN (61 aa)).

The protein belongs to the endophilin family. Homodimer, and heterodimer with SH3GLB2. Binds BAX; induction of apoptosis augments BAX binding. Binds DNM1, HTT, AMPH, BIN1 and ARFGAP1. Interacts with UVRAG; UVRAG bridges the interaction to BECN1 indicative for an association with the PI3K complex II (PI3KC3-C2). In terms of processing, phosphorylated at Thr-145 by CDK5; this phosphorylation is required for autophagy induction in starved neurons and facilitates homodimerization. Highly expressed in heart, skeletal muscle, kidney and placenta. Detected at lower levels in brain, colon, thymus, spleen, liver, small intestine, lung and peripheral blood leukocytes.

Its subcellular location is the cytoplasm. The protein resides in the golgi apparatus membrane. It is found in the mitochondrion outer membrane. It localises to the cytoplasmic vesicle. The protein localises to the autophagosome membrane. Its subcellular location is the midbody. In terms of biological role, may be required for normal outer mitochondrial membrane dynamics. Required for coatomer-mediated retrograde transport in certain cells. May recruit other proteins to membranes with high curvature. May promote membrane fusion. Involved in activation of caspase-dependent apoptosis by promoting BAX/BAK1 activation. Isoform 1 acts proapoptotic in fibroblasts. Involved in caspase-independent apoptosis during nutrition starvation and involved in the regulation of autophagy. Activates lipid kinase activity of PIK3C3 during autophagy probably by associating with the PI3K complex II (PI3KC3-C2). Associated with PI3KC3-C2 during autophagy may regulate the trafficking of ATG9A from the Golgi complex to the peripheral cytoplasm for the formation of autophagosomes by inducing Golgi membrane tubulation and fragmentation. Involved in regulation of degradative endocytic trafficking and cytokinesis, probably in the context of PI3KC3-C2. Isoform 2 acts antiapoptotic in neuronal cells; involved in maintenance of mitochondrial morphology and promotes neuronal viability. This Homo sapiens (Human) protein is Endophilin-B1 (SH3GLB1).